The chain runs to 688 residues: Putative proline--tRNA ligase YHR020W (688 aa).

The residue at position 149 (serine 149) is a Phosphoserine. Threonine 170 carries the phosphothreonine modification. A disordered region spans residues 631-650; that stretch reads ESSAKKDDGEEFEEDDKAPS. Position 655 is a phosphoserine (serine 655).

The protein belongs to the class-II aminoacyl-tRNA synthetase family.

It carries out the reaction tRNA(Pro) + L-proline + ATP = L-prolyl-tRNA(Pro) + AMP + diphosphate. This is Putative proline--tRNA ligase YHR020W from Saccharomyces cerevisiae (strain ATCC 204508 / S288c) (Baker's yeast).